The sequence spans 144 residues: Giant hemoglobins B chain (144 aa).

In terms of domain architecture, Globin spans 3 to 144; the sequence is VCGPLQRLKV…LNVITNGIQG (142 aa). Heme b is bound at residue His96.

This sequence belongs to the globin family. In terms of assembly, part of giant hemoglobin C1, V1 and V2. This worm has three different extracellular Hbs: two dissolved in the vascular blood, V1 (CA. 3,500 kDa) and V2 (CA. 400 kDa), and one in the coelomic fluid, C1 (CA. 400 kDa). V1 consists of four heme-containing, globin chains (B-E) and four linker chains (L1-L4). V2 consists of six globin chains (A-F) and C1 consists of five globin chains (A-E).

It is found in the secreted. The protein localises to the extracellular space. This chain is Giant hemoglobins B chain, found in Riftia pachyptila (Vent tube worm).